The sequence spans 73 residues: Carboxysome shell vertex protein CsoS4B (73 aa).

In terms of domain architecture, BMV spans 1–68; it reads MVCTQRVAGL…TDLTIGGIID (68 aa).

This sequence belongs to the CcmL/EutN family. CsoS4 subfamily. As to quaternary structure, homopentamer.

It localises to the carboxysome. In terms of biological role, probably forms vertices in the carboxysome, a polyhedral inclusion where RuBisCO (ribulose bisphosphate carboxylase, cbbL-cbbS) is sequestered. Has been modeled to induce curvature upon insertion into an otherwise flat hexagonal layer of major carboxysome subunits. Has not been identified in purified carboxysomes; it is expected to be present in very low amounts. This is Carboxysome shell vertex protein CsoS4B from Prochlorococcus marinus subsp. pastoris (strain CCMP1986 / NIES-2087 / MED4).